Consider the following 125-residue polypeptide: Holo-[acyl-carrier-protein] synthase (125 aa).

2 residues coordinate Mg(2+): aspartate 8 and glutamate 57.

The protein belongs to the P-Pant transferase superfamily. AcpS family. The cofactor is Mg(2+).

The protein localises to the cytoplasm. The enzyme catalyses apo-[ACP] + CoA = holo-[ACP] + adenosine 3',5'-bisphosphate + H(+). Transfers the 4'-phosphopantetheine moiety from coenzyme A to a Ser of acyl-carrier-protein. In Natranaerobius thermophilus (strain ATCC BAA-1301 / DSM 18059 / JW/NM-WN-LF), this protein is Holo-[acyl-carrier-protein] synthase.